Here is a 520-residue protein sequence, read N- to C-terminus: Sensory neuron membrane protein 2 (520 aa).

Topologically, residues M1 to K7 are cytoplasmic. A helical transmembrane segment spans residues I8 to F28. The Extracellular segment spans residues Q29 to E468. Residues N44, N67, N104, N228, N271, N313, and N342 are each glycosylated (N-linked (GlcNAc...) asparagine). 3 cysteine pairs are disulfide-bonded: C267-C337, C298-C361, and C339-C350. Residues V469–V489 form a helical membrane-spanning segment. The Cytoplasmic portion of the chain corresponds to A490–N520.

The protein belongs to the CD36 family. In terms of tissue distribution, localizes to cells surrounding the sensory neurons in the antenna. Associate in a ratio of 2:1 with the neurons expressing the other subtype SNMP1.

It is found in the cell membrane. Functionally, plays an olfactory role that is not restricted to pheromone sensitivity. May play a role in the elimination of lipophilic components from the sensillum lymph. This is Sensory neuron membrane protein 2 from Heliothis virescens (Tobacco budworm moth).